The sequence spans 520 residues: Hydroxymethylglutaryl-CoA synthase, cytoplasmic (520 aa).

Serine 4 is subject to Phosphoserine. Residues aspartate 43 and alanine 44 each coordinate (3S)-3-hydroxy-3-methylglutaryl-CoA. Alanine 44 to lysine 46 serves as a coordination point for CoA. The residue at position 46 (lysine 46) is an N6-acetyllysine. Glutamate 95 functions as the Proton donor/acceptor in the catalytic mechanism. (3S)-3-hydroxy-3-methylglutaryl-CoA-binding residues include cysteine 129, asparagine 167, threonine 171, serine 221, and histidine 264. Cysteine 129 (acyl-thioester intermediate) is an active-site residue. Asparagine 167 serves as a coordination point for CoA. CoA is bound at residue serine 221. Histidine 264 acts as the Proton donor/acceptor in catalysis. CoA contacts are provided by lysine 269 and lysine 273. Residues lysine 273, asparagine 343, and serine 377 each coordinate (3S)-3-hydroxy-3-methylglutaryl-CoA. Lysine 273 carries the post-translational modification N6-acetyllysine. Residues asparagine 487–histidine 520 form a disordered region. Residues serine 495 and serine 516 each carry the phosphoserine modification.

This sequence belongs to the thiolase-like superfamily. HMG-CoA synthase family. As to quaternary structure, homodimer.

It localises to the cytoplasm. The enzyme catalyses acetoacetyl-CoA + acetyl-CoA + H2O = (3S)-3-hydroxy-3-methylglutaryl-CoA + CoA + H(+). It participates in metabolic intermediate biosynthesis; (R)-mevalonate biosynthesis; (R)-mevalonate from acetyl-CoA: step 2/3. Its function is as follows. Catalyzes the condensation of acetyl-CoA with acetoacetyl-CoA to form HMG-CoA, which is converted by HMG-CoA reductase (HMGCR) into mevalonate, a precursor for cholesterol synthesis. This is Hydroxymethylglutaryl-CoA synthase, cytoplasmic from Rattus norvegicus (Rat).